The sequence spans 168 residues: Phosphopantetheine adenylyltransferase (168 aa).

Substrate is bound at residue Thr9. ATP is bound by residues 9–10 (TF) and His17. Residues Lys41, Leu74, and Arg88 each contribute to the substrate site. ATP-binding positions include 89 to 91 (GLR), Glu99, and 124 to 130 (LQPIASR).

Belongs to the bacterial CoaD family. As to quaternary structure, homohexamer. The cofactor is Mg(2+).

It localises to the cytoplasm. It carries out the reaction (R)-4'-phosphopantetheine + ATP + H(+) = 3'-dephospho-CoA + diphosphate. It functions in the pathway cofactor biosynthesis; coenzyme A biosynthesis; CoA from (R)-pantothenate: step 4/5. Its function is as follows. Reversibly transfers an adenylyl group from ATP to 4'-phosphopantetheine, yielding dephospho-CoA (dPCoA) and pyrophosphate. The sequence is that of Phosphopantetheine adenylyltransferase from Sphingopyxis alaskensis (strain DSM 13593 / LMG 18877 / RB2256) (Sphingomonas alaskensis).